The primary structure comprises 304 residues: N-acetyl-D-glucosamine kinase (304 aa).

ATP-binding positions include 4-11 (GFDMGGTK) and 133-140 (GLGGGLVI). Residues His157, Cys177, Cys179, and Cys184 each contribute to the Zn(2+) site.

Belongs to the ROK (NagC/XylR) family. NagK subfamily.

It carries out the reaction N-acetyl-D-glucosamine + ATP = N-acetyl-D-glucosamine 6-phosphate + ADP + H(+). The protein operates within cell wall biogenesis; peptidoglycan recycling. Its function is as follows. Catalyzes the phosphorylation of N-acetyl-D-glucosamine (GlcNAc) derived from cell-wall degradation, yielding GlcNAc-6-P. The polypeptide is N-acetyl-D-glucosamine kinase (Pectobacterium carotovorum subsp. carotovorum (strain PC1)).